The following is a 395-amino-acid chain: Alanine racemase 2 (395 aa).

Lys60 serves as the catalytic Proton acceptor; specific for D-alanine. N6-(pyridoxal phosphate)lysine is present on Lys60. A substrate-binding site is contributed by Arg158. Residue Tyr288 is the Proton acceptor; specific for L-alanine of the active site. Met332 is a substrate binding site.

The protein belongs to the alanine racemase family. Pyridoxal 5'-phosphate is required as a cofactor.

The catalysed reaction is L-alanine = D-alanine. The protein operates within amino-acid biosynthesis; D-alanine biosynthesis; D-alanine from L-alanine: step 1/1. In terms of biological role, catalyzes the interconversion of L-alanine and D-alanine. May also act on other amino acids. In Clostridium acetobutylicum (strain ATCC 824 / DSM 792 / JCM 1419 / IAM 19013 / LMG 5710 / NBRC 13948 / NRRL B-527 / VKM B-1787 / 2291 / W), this protein is Alanine racemase 2 (alr2).